A 750-amino-acid chain; its full sequence is Rho GTPase-activating protein 9 (750 aa).

Residues 22 to 88 enclose the SH3 domain; that stretch reads PRGSQLCALY…PAAYMIEESI (67 aa). 2 disordered regions span residues 120 to 187 and 242 to 319; these read ALPS…LMSE and WKPP…LLDD. Residues 163 to 180 show a composition bias toward polar residues; that stretch reads RSLSQEDLPSEASASTAG. The 35-residue stretch at 213 to 247 folds into the WW domain; that stretch reads LQRLDAWEQHLDPNSGRCFYINSLTGCKSWKPPRR. 2 stretches are compositionally biased toward polar residues: residues 251–270 and 291–300; these read ETNP…NDVL and GSLSLSQRTS. The segment covering 301–317 has biased composition (low complexity); sequence QLDPPALQAPRPLPQLL. The region spanning 322–435 is the PH domain; it reads EVEKSGLLNM…WHRALRTVIE (114 aa). 3 lipid binding regions span residues 342–345, 397–399, and 432–669; these read RKNW, SSR, and TVIE…CLSQ. Over residues 446–462 the composition is skewed to basic and acidic residues; sequence EAPTGRDQGSGDRENPL. The disordered stretch occupies residues 446 to 488; that stretch reads EAPTGRDQGSGDRENPLELRLSGSGPAELSAGEDEEEESELVS. Phosphoserine is present on Ser-475. Residues 476–485 show a composition bias toward acidic residues; the sequence is AGEDEEEESE. Ser-500 is modified (phosphoserine). Residues 542-749 enclose the Rho-GAP domain; the sequence is CQLESLCQRE…LMLTNFTSLF (208 aa).

Interacts with FASLG. As to expression, predominantly expressed in peripheral blood leukocytes, spleen, and thymus.

In terms of biological role, GTPase activator for the Rho-type GTPases by converting them to an inactive GDP-bound state. Has a substantial GAP activity toward CDC42 and RAC1 and less toward RHOA. Has a role in regulating adhesion of hematopoietic cells to the extracellular matrix. Binds phosphoinositides, and has the highest affinity for phosphatidylinositol 3,4,5-trisphosphate, followed by phosphatidylinositol 3,4-bisphosphate and phosphatidylinositol 4,5-bisphosphate. The chain is Rho GTPase-activating protein 9 (ARHGAP9) from Homo sapiens (Human).